A 178-amino-acid chain; its full sequence is CD209 antigen-like protein C (178 aa).

C48 and C59 form a disulfide bridge. The C-type lectin domain maps to 54 to 169 (VFQGNCYFFS…CTIKKYWICK (116 aa)). An N-linked (GlcNAc...) asparagine glycan is attached at N70. Intrachain disulfides connect C76/C168 and C147/C160. Ca(2+) is bound by residues E138, N140, E145, N156, and D157.

Probable pathogen-recognition receptor. May recognize in a calcium-dependent manner high mannose N-linked oligosaccharides in a variety of pathogen antigens. The chain is CD209 antigen-like protein C (Cd209c) from Mus musculus (Mouse).